Consider the following 484-residue polypeptide: RNA polymerase sigma-54 factor 1 (484 aa).

The segment at residues 355–374 (NLKAVAEAIQMHESTVSRVT) is a DNA-binding region (H-T-H motif). An RPON box motif is present at residues 444-452 (ARRTVAKYR). The disordered stretch occupies residues 464–484 (RRDNMWSTMNSRASGGTGLDK). Polar residues predominate over residues 468 to 477 (MWSTMNSRAS).

It belongs to the sigma-54 factor family.

In terms of biological role, sigma factors are initiation factors that promote the attachment of RNA polymerase to specific initiation sites and are then released. This sigma factor is responsible for the expression of the nitrogen fixation genes. The chain is RNA polymerase sigma-54 factor 1 (rpoN1) from Bradyrhizobium diazoefficiens (strain JCM 10833 / BCRC 13528 / IAM 13628 / NBRC 14792 / USDA 110).